Consider the following 234-residue polypeptide: AA9 family lytic polysaccharide monooxygenase D (234 aa).

Positions 1–18 are cleaved as a signal peptide; the sequence is MRIEKLLNAALLAGAVSA. Positions 19 and 95 each coordinate Cu(2+). A disulfide bridge links C57 with C182. H168 and Q177 together coordinate O2. Y179 contributes to the Cu(2+) binding site.

The protein belongs to the polysaccharide monooxygenase AA9 family. Requires Cu(2+) as cofactor.

The protein localises to the secreted. It catalyses the reaction [(1-&gt;4)-beta-D-glucosyl]n+m + reduced acceptor + O2 = 4-dehydro-beta-D-glucosyl-[(1-&gt;4)-beta-D-glucosyl]n-1 + [(1-&gt;4)-beta-D-glucosyl]m + acceptor + H2O.. In terms of biological role, lytic polysaccharide monooxygenase (LPMO) that depolymerizes crystalline and amorphous polysaccharides via the oxidation of scissile alpha- or beta-(1-4)-glycosidic bonds, yielding C1 or C4 oxidation products. Catalysis by LPMOs requires the reduction of the active-site copper from Cu(II) to Cu(I) by a reducing agent and H(2)O(2) or O(2) as a cosubstrate. The sequence is that of AA9 family lytic polysaccharide monooxygenase D from Malbranchea cinnamomea (Thermophilic fungus).